The sequence spans 310 residues: p-hydroxybenzoic acid efflux pump subunit AaeA (310 aa).

A helical membrane pass occupies residues 12 to 32; the sequence is VITLLLVIIAIVLIFRIWVFY.

It belongs to the membrane fusion protein (MFP) (TC 8.A.1) family.

The protein resides in the cell inner membrane. Forms an efflux pump with AaeB. The sequence is that of p-hydroxybenzoic acid efflux pump subunit AaeA from Erwinia tasmaniensis (strain DSM 17950 / CFBP 7177 / CIP 109463 / NCPPB 4357 / Et1/99).